The following is a 340-amino-acid chain: Fructose-1,6-bisphosphatase class 1 (340 aa).

Glu107, Asp126, Leu128, and Asp129 together coordinate Mg(2+). Asn215 serves as a coordination point for substrate. Mg(2+) is bound at residue Glu287.

This sequence belongs to the FBPase class 1 family. As to quaternary structure, homotetramer. It depends on Mg(2+) as a cofactor.

It localises to the cytoplasm. The enzyme catalyses beta-D-fructose 1,6-bisphosphate + H2O = beta-D-fructose 6-phosphate + phosphate. It functions in the pathway carbohydrate biosynthesis; gluconeogenesis. This Brucella suis biovar 1 (strain 1330) protein is Fructose-1,6-bisphosphatase class 1.